The primary structure comprises 125 residues: Morphine 6-dehydrogenase (125 aa).

NADP(+) contacts are provided by residues 9-18 (GHSIPVLGFI) and 74-111 (SALG…IERE).

The protein belongs to the aldo/keto reductase family. Monomer. Post-translationally, the N-terminus is blocked.

It localises to the cytoplasm. The enzyme catalyses morphine + NAD(+) = morphinone + NADH + H(+). The catalysed reaction is morphine + NADP(+) = morphinone + NADPH + H(+). Its activity is regulated as follows. Strongly inhibited by sulfhydryl reagents and quercetin, but not by pyrazole, barbital and indomethacine. Catalyzes the dehydrogenation of morphine to morphinone. Uses both NAD and NADP, but the activity is much greater with NAD than with NADP. The sequence is that of Morphine 6-dehydrogenase from Oryctolagus cuniculus (Rabbit).